The chain runs to 320 residues: tRNA uridine(34) hydroxylase (320 aa).

A Rhodanese domain is found at 123-217 (EDENTVILDA…YGKDPETKGQ (95 aa)). The active-site Cysteine persulfide intermediate is Cys-177.

Belongs to the TrhO family.

It catalyses the reaction uridine(34) in tRNA + AH2 + O2 = 5-hydroxyuridine(34) in tRNA + A + H2O. Functionally, catalyzes oxygen-dependent 5-hydroxyuridine (ho5U) modification at position 34 in tRNAs. The sequence is that of tRNA uridine(34) hydroxylase from Staphylococcus epidermidis (strain ATCC 12228 / FDA PCI 1200).